Here is a 653-residue protein sequence, read N- to C-terminus: UvrABC system protein C (653 aa).

A GIY-YIG domain is found at 44–122 (NAPGVYRMVN…IKRLRPRFNV (79 aa)). A UVR domain is found at 232–267 (STVKAEIATAMQEASQALDFERAAIYRDRLAALSHV).

Belongs to the UvrC family. In terms of assembly, interacts with UvrB in an incision complex.

The protein resides in the cytoplasm. In terms of biological role, the UvrABC repair system catalyzes the recognition and processing of DNA lesions. UvrC both incises the 5' and 3' sides of the lesion. The N-terminal half is responsible for the 3' incision and the C-terminal half is responsible for the 5' incision. The sequence is that of UvrABC system protein C from Chelativorans sp. (strain BNC1).